A 341-amino-acid chain; its full sequence is L-threonine 3-dehydrogenase (341 aa).

Cysteine 38 provides a ligand contact to Zn(2+). Catalysis depends on charge relay system residues threonine 40 and histidine 43. Residues histidine 63, glutamate 64, cysteine 93, cysteine 96, cysteine 99, and cysteine 107 each contribute to the Zn(2+) site. NAD(+)-binding positions include isoleucine 175, aspartate 195, arginine 200, leucine 262–isoleucine 264, and isoleucine 286–tyrosine 287.

The protein belongs to the zinc-containing alcohol dehydrogenase family. As to quaternary structure, homotetramer. The cofactor is Zn(2+).

The protein localises to the cytoplasm. The catalysed reaction is L-threonine + NAD(+) = (2S)-2-amino-3-oxobutanoate + NADH + H(+). It functions in the pathway amino-acid degradation; L-threonine degradation via oxydo-reductase pathway; glycine from L-threonine: step 1/2. In terms of biological role, catalyzes the NAD(+)-dependent oxidation of L-threonine to 2-amino-3-ketobutyrate. In Photorhabdus laumondii subsp. laumondii (strain DSM 15139 / CIP 105565 / TT01) (Photorhabdus luminescens subsp. laumondii), this protein is L-threonine 3-dehydrogenase.